The chain runs to 1183 residues: DNA-directed RNA polymerase subunit beta (1183 aa).

This sequence belongs to the RNA polymerase beta chain family. In terms of assembly, the RNAP catalytic core consists of 2 alpha, 1 beta, 1 beta' and 1 omega subunit. When a sigma factor is associated with the core the holoenzyme is formed, which can initiate transcription.

The catalysed reaction is RNA(n) + a ribonucleoside 5'-triphosphate = RNA(n+1) + diphosphate. In terms of biological role, DNA-dependent RNA polymerase catalyzes the transcription of DNA into RNA using the four ribonucleoside triphosphates as substrates. The sequence is that of DNA-directed RNA polymerase subunit beta from Staphylococcus aureus (strain MRSA252).